Here is a 346-residue protein sequence, read N- to C-terminus: NADH-ubiquinone oxidoreductase chain 2 (346 aa).

11 helical membrane-spanning segments follow: residues 1–21 (MNPHATPVLVLSLALGTTITI), 25–45 (HWVLAWTGLEINTLAIIPLIS), 60–80 (FLTQAAASALVLFSSMTNAWA), 95–115 (CLLLTAAIAIKLGLVPFHFWF), 124–144 (LMTALLLSTLMKFPPLTLLLM), 149–169 (LNPALLTTMALASAALGGWMG), 178–195 (ILAFSSISHLGWIAIILV), 200–219 (LALLTFYLYTIMTSAVFMAL), 242–262 (ATLMLVLLSLAGLPPLTGFMP), 274–294 (EMTPAAMAIAMLSLLSLFFYL), and 326–346 (AILASLSILLLPLSPMIHAIV).

It belongs to the complex I subunit 2 family.

The protein localises to the mitochondrion inner membrane. The enzyme catalyses a ubiquinone + NADH + 5 H(+)(in) = a ubiquinol + NAD(+) + 4 H(+)(out). Its function is as follows. Core subunit of the mitochondrial membrane respiratory chain NADH dehydrogenase (Complex I) that is believed to belong to the minimal assembly required for catalysis. Complex I functions in the transfer of electrons from NADH to the respiratory chain. The immediate electron acceptor for the enzyme is believed to be ubiquinone. The polypeptide is NADH-ubiquinone oxidoreductase chain 2 (MT-ND2) (Mareca americana (American wigeon)).